Consider the following 704-residue polypeptide: Ribosomal RNA large subunit methyltransferase K/L (704 aa).

One can recognise a THUMP domain in the interval 43-154 (TMYQSLLWSR…KEKASLSLDL (112 aa)).

Belongs to the methyltransferase superfamily. RlmKL family.

It is found in the cytoplasm. It carries out the reaction guanosine(2445) in 23S rRNA + S-adenosyl-L-methionine = N(2)-methylguanosine(2445) in 23S rRNA + S-adenosyl-L-homocysteine + H(+). It catalyses the reaction guanosine(2069) in 23S rRNA + S-adenosyl-L-methionine = N(2)-methylguanosine(2069) in 23S rRNA + S-adenosyl-L-homocysteine + H(+). Specifically methylates the guanine in position 2445 (m2G2445) and the guanine in position 2069 (m7G2069) of 23S rRNA. This is Ribosomal RNA large subunit methyltransferase K/L from Proteus mirabilis (strain HI4320).